Here is a 436-residue protein sequence, read N- to C-terminus: Histidine--tRNA ligase 1 (436 aa).

Belongs to the class-II aminoacyl-tRNA synthetase family. In terms of assembly, homodimer.

Its subcellular location is the cytoplasm. The catalysed reaction is tRNA(His) + L-histidine + ATP = L-histidyl-tRNA(His) + AMP + diphosphate + H(+). The protein is Histidine--tRNA ligase 1 of Bacillus cereus (strain ATCC 10987 / NRS 248).